Consider the following 644-residue polypeptide: Zinc transporter ZIP4 (644 aa).

Positions M1 to P27 are cleaved as a signal peptide. The Extracellular portion of the chain corresponds to A28 to Y323. 3 cysteine pairs are disulfide-bonded: C59–C64, C67–C103, and C153–C188. Residues T231–S259 form a disordered region. Residues T233 to V244 show a composition bias toward basic and acidic residues. A compositionally biased stretch (polar residues) spans Q247 to S259. A disulfide bridge links C266 with C305. Residues L324–L344 traverse the membrane as a helical segment. At T345–Y355 the chain is on the cytoplasmic side. A helical transmembrane segment spans residues V356–L376. The Extracellular segment spans residues T377 to R404. Residues L405–L425 form a helical membrane-spanning segment. Residues L426–Y495 are Cytoplasmic-facing. The Essential for SLC39A4 endocytosis motif lies at L449–L451. Residues L456–R467 are compositionally biased toward basic and acidic residues. Residues L456–R484 are disordered. The chain crosses the membrane as a helical span at residues M496–A515. The Zn(2+) site is built by H504, N505, and D508. Topologically, residues F516–G523 are extracellular. A helical membrane pass occupies residues L524 to L550. Zn(2+)-binding residues include H533, E534, and H537. The Cytoplasmic segment spans residues P551–A555. A helical transmembrane segment spans residues L556–L576. The Extracellular segment spans residues G577 to E583. The chain crosses the membrane as a helical span at residues S584–P604. Residues A605–P614 are Cytoplasmic-facing. Residues W615–L635 traverse the membrane as a helical segment. Residues S636–L644 lie on the Extracellular side of the membrane.

This sequence belongs to the ZIP transporter (TC 2.A.5) family. In terms of assembly, homodimer. Post-translationally, the extracellular N-terminal ectodomain is cleaved when cells are Zn(2+) deficient, N-terminally cleaved SLC39A4 is internalized at a faster rate. In terms of processing, under excess Zn(2+) conditions, SLC39A4 on the cell surface is rapidly endocytosed, ubiquitinated and degraded. Glycosylated.

Its subcellular location is the cell membrane. It localises to the recycling endosome membrane. It is found in the apical cell membrane. It carries out the reaction Zn(2+)(in) = Zn(2+)(out). Selective transporter that mediates the uptake of Zn(2+). Plays an essential role for dietary zinc uptake from small intestine. The Zn(2+) uniporter activity is regulated by zinc availability. Also exhibits polyspecific binding and transport of Cu(2+), Cd(2+) and possibly Ni(2+) but at higher concentrations. This Pteropus alecto (Black flying fox) protein is Zinc transporter ZIP4.